The sequence spans 779 residues: Protein WEAK CHLOROPLAST MOVEMENT UNDER BLUE LIGHT-like 1 (779 aa).

The segment at 1 to 119 (MEDLKTTDAL…NAVSPRPLYS (119 aa)) is disordered. Positions 79–88 (DSPTTPSFVS) are enriched in polar residues. Ser-139 is modified (phosphoserine). 3 coiled-coil regions span residues 182-503 (RMKV…KQRE), 532-587 (KETR…ESRL), and 657-715 (AVSE…KWRE). Residues 650–661 (ANARVAAAVSEV) show a composition bias toward low complexity. Disordered stretches follow at residues 650 to 674 (ANAR…SLEK) and 694 to 759 (EKAE…NPVK). Basic and acidic residues-rich tracts occupy residues 662–674 (GEAK…SLEK) and 694–718 (EKAE…EVSE). Residues 741 to 753 (TSVSNETETNPIP) are compositionally biased toward polar residues.

It belongs to the WEB family.

The protein is Protein WEAK CHLOROPLAST MOVEMENT UNDER BLUE LIGHT-like 1 (WEL1) of Arabidopsis thaliana (Mouse-ear cress).